The following is a 593-amino-acid chain: Glyoxylate carboligase (593 aa).

The protein belongs to the TPP enzyme family. In terms of assembly, homotetramer. Requires Mg(2+) as cofactor. The cofactor is thiamine diphosphate.

It carries out the reaction 2 glyoxylate + H(+) = 2-hydroxy-3-oxopropanoate + CO2. It functions in the pathway organic acid metabolism; glycolate degradation; 3-phospho-D-glycerate from glycolate: step 2/4. Functionally, catalyzes the condensation of two molecules of glyoxylate to give 2-hydroxy-3-oxopropanoate (also termed tartronate semialdehyde). This is Glyoxylate carboligase (gcl) from Escherichia coli O157:H7.